Consider the following 77-residue polypeptide: Conotoxin S6.11 (77 aa).

Positions 1-19 (MEKLTILLLVAAVLMSTQA) are cleaved as a signal peptide. Residues 20 to 50 (LIQGGLDERQKAKSNFFSKRKSNAESWWEGE) constitute a propeptide that is removed on maturation. 3 cysteine pairs are disulfide-bonded: Cys51-Cys65, Cys58-Cys69, and Cys64-Cys74.

This sequence belongs to the conotoxin O2 superfamily. Expressed by the venom duct.

It is found in the secreted. The sequence is that of Conotoxin S6.11 from Conus striatus (Striated cone).